Here is a 75-residue protein sequence, read N- to C-terminus: Mitochondrial import receptor subunit TOM7-1 (75 aa).

M1 is subject to N-acetylmethionine. The interval M1 to K28 is disordered. At M1 to V46 the chain is on the cytoplasmic side. The chain crosses the membrane as a helical span at residues T47–P64. Topologically, residues K65–V75 are mitochondrial intermembrane.

This sequence belongs to the Tom7 family. In terms of assembly, forms part of the preprotein translocase complex of the outer mitochondrial membrane (TOM complex) which consists of at least 6 different proteins (TOM5, TOM6, TOM7, TOM20, TOM22/TOM9 and TOM40). As to expression, expressed in roots, flowers, young cotyledons and leaves.

The protein resides in the mitochondrion outer membrane. Its function is as follows. Seems to act as a modulator of the dynamics of the mitochondrial protein transport machinery. Seems to promote the dissociation of subunits of the outer membrane translocase. This Arabidopsis thaliana (Mouse-ear cress) protein is Mitochondrial import receptor subunit TOM7-1 (TOM7-1).